We begin with the raw amino-acid sequence, 267 residues long: UPF0173 metal-dependent hydrolase THEYE_A0282 (267 aa).

It belongs to the UPF0173 family.

The sequence is that of UPF0173 metal-dependent hydrolase THEYE_A0282 from Thermodesulfovibrio yellowstonii (strain ATCC 51303 / DSM 11347 / YP87).